We begin with the raw amino-acid sequence, 668 residues long: DNA ligase (668 aa).

NAD(+) contacts are provided by residues 35 to 39 (DQEYD), 84 to 85 (SL), and Glu115. The active-site N6-AMP-lysine intermediate is Lys117. NAD(+) is bound by residues Arg138, Glu172, Lys288, and Lys312. Cys406, Cys409, Cys425, and Cys430 together coordinate Zn(2+). Residues 589–668 (KLEGPLKGLV…EEFFDKYGES (80 aa)) enclose the BRCT domain.

This sequence belongs to the NAD-dependent DNA ligase family. LigA subfamily. It depends on Mg(2+) as a cofactor. Mn(2+) serves as cofactor.

The enzyme catalyses NAD(+) + (deoxyribonucleotide)n-3'-hydroxyl + 5'-phospho-(deoxyribonucleotide)m = (deoxyribonucleotide)n+m + AMP + beta-nicotinamide D-nucleotide.. In terms of biological role, DNA ligase that catalyzes the formation of phosphodiester linkages between 5'-phosphoryl and 3'-hydroxyl groups in double-stranded DNA using NAD as a coenzyme and as the energy source for the reaction. It is essential for DNA replication and repair of damaged DNA. In Petrotoga mobilis (strain DSM 10674 / SJ95), this protein is DNA ligase.